The following is a 645-amino-acid chain: Cilia- and flagella-associated protein 221 homolog (645 aa).

The interval 381-408 is disordered; that stretch reads GGAVHQPSAPVGSSSSGGGGGSDPAFKP. The segment at 428 to 435 is interaction with calmodulin; the sequence is THQRLQRR.

This sequence belongs to the PCDP1 family. In terms of assembly, interacts with calmodulin; calcium-dependent. Part of the PDCP1 complex composed of CFAP46, CFAP54, CFAP74 and CFAP221; the PDCP1 complex binds calmodulin.

The protein resides in the cytoplasm. It is found in the cytoskeleton. Its subcellular location is the cilium axoneme. Functionally, may play a role in cilium morphogenesis. The protein is Cilia- and flagella-associated protein 221 homolog of Chlamydomonas reinhardtii (Chlamydomonas smithii).